Consider the following 369-residue polypeptide: MDPRKVNELRAFVKMCKQDPSVLHTEEMRFLREWVESMGGKVPPATQKAKSEENTKEEKPDSKKVEEDLKADEPSSEESDLEIDKEGVIEPDTDAPQEMGDENAEITEEMMDQANDKKVAAIEALNDGELQKAIDLFTDAIKLNPRLAILYAKRASVFVKLQKPNAAIRDCDRAIEINPDSAQPYKWRGKAHRLLGHWEEAAHDLALACKLDYDEDASAMLKEVQPRAQKIAEHRRKYERKREEREIKERIERVKKAREEHERAQREEEARRQSGAQYGSFPGGFPGGMPGNFPGGMPGMGGGMPGMAGMPGLNEILSDPEVLAAMQDPEVMVAFQDVAQNPANMSKYQSNPKVMNLISKLSAKFGGQA.

Positions M38–Q97 are disordered. Residues A49 to E73 are compositionally biased toward basic and acidic residues. TPR repeat units lie at residues A114–L147, A148–S181, and A182–E215. Residues K256–R272 show a composition bias toward basic and acidic residues. The segment at K256–M300 is disordered. The span at F281–M300 shows a compositional bias: gly residues. Positions D319 to I358 constitute an STI1 domain. S346 carries the phosphoserine; by GRK5 modification. K353 and K360 each carry N6-acetyllysine.

Belongs to the FAM10 family. As to quaternary structure, homotetramer. Interacts with HSC70 as well as DNAJ homologs and HSP90. Interacts (via the C-terminus 303- 319 AA) with GRK5.

The protein localises to the cytoplasm. In terms of biological role, one HIP oligomer binds the ATPase domains of at least two HSC70 molecules dependent on activation of the HSC70 ATPase by HSP40. Stabilizes the ADP state of HSC70 that has a high affinity for substrate protein. Through its own chaperone activity, it may contribute to the interaction of HSC70 with various target proteins. The protein is Hsc70-interacting protein (ST13) of Homo sapiens (Human).